Here is a 248-residue protein sequence, read N- to C-terminus: Tyrosine recombinase XerD-like (248 aa).

In terms of domain architecture, Core-binding (CB) spans 1-72 (MIAFIEPFLA…TVNQFLYYLY (72 aa)). A Tyr recombinase domain is found at 92–248 (SLKPQLTRLD…PITLEKYYKM (157 aa)). Arginine 213 is an active-site residue. Tyrosine 245 serves as the catalytic O-(3'-phospho-DNA)-tyrosine intermediate.

This sequence belongs to the 'phage' integrase family. XerD-like subfamily.

It is found in the cytoplasm. In terms of biological role, putative tyrosine recombinase. Not involved in the cutting and rejoining of the recombining DNA molecules on dif(SL) site. This chain is Tyrosine recombinase XerD-like, found in Streptococcus equi subsp. zooepidemicus (strain H70).